The chain runs to 230 residues: Protein CWC15 homolog B (230 aa).

Residues 1 to 126 are disordered; the sequence is MTTAARPTFE…DEDSDDDTAA (126 aa). Residues 22–34 show a composition bias toward polar residues; that stretch reads DLSQLSKQYSSRD. Residues 52–84 show a composition bias toward basic and acidic residues; that stretch reads EEVRSRDFRRELEERERVAVRDKNRDRPTREHT. The span at 102–124 shows a compositional bias: acidic residues; sequence DADDPLTDEDADEDSDEDSDDDT. Positions 121–165 form a coiled coil; that stretch reads DDDTAALLAELEKIKKERAEEQVRKELEQKAEEERIRMENILSGN.

This sequence belongs to the CWC15 family. In terms of assembly, identified in the spliceosome C complex. Component of the minor spliceosome, which splices U12-type introns.

The protein resides in the nucleus. In terms of biological role, involved in pre-mRNA splicing as component of the spliceosome. This Xenopus laevis (African clawed frog) protein is Protein CWC15 homolog B (cwc15-b).